A 325-amino-acid chain; its full sequence is DDB1- and CUL4-associated factor 7 homolog (325 aa).

WD repeat units follow at residues 62–104, 115–155, 158–197, and 247–287; these read EHPY…RSIK, EFCA…AKTQ, AHDK…HSTI, and FHKS…KPIE.

Belongs to the WD repeat DCAF7 family.

This is DDB1- and CUL4-associated factor 7 homolog (wdr68) from Dictyostelium discoideum (Social amoeba).